The following is a 2210-amino-acid chain: RNA-directed RNA polymerase L (2210 aa).

The segment at 26-284 (RDIFLSQHHP…SHKDSDVPSC (259 aa)) is endonuclease. Positions 51, 89, and 102 each coordinate Mn(2+). Residue Lys-115 is part of the active site. The 198-residue stretch at 1171-1368 (CDMKMAVNNG…FLSSKLNKFI (198 aa)) folds into the RdRp catalytic domain. Residue Asp-1329 participates in Mg(2+) binding.

Belongs to the Bunyavirales RNA polymerase family. In terms of assembly, homomultimer; the oligomeric structure is essential for the polymerase activity. Interacts with nucleoprotein N. Interacts with protein Z; this interaction inhibits viral transcription and replication, Z partially blocks the product exit tunnel for the releasing nascent RNA product. The cofactor is Mn(2+). Mg(2+) serves as cofactor.

Its subcellular location is the virion. The protein resides in the host cytoplasm. It catalyses the reaction RNA(n) + a ribonucleoside 5'-triphosphate = RNA(n+1) + diphosphate. Functionally, RNA-dependent RNA polymerase, which is responsible for the replication and transcription of the viral RNA genome using antigenomic RNA as an intermediate. During transcription, synthesizes subgenomic RNAs and assures their capping by a cap-snatching mechanism, which involves the endonuclease activity cleaving the host capped pre-mRNAs. These short capped RNAs are then used as primers for viral transcription. The 3'-end of subgenomic mRNAs molecules are heterogeneous and not polyadenylated. The replicase function is to direct synthesis of antigenomic and genomic RNA which are encapsidated and non capped. As a consequence of the use of the same enzyme for both transcription and replication, these mechanisms need to be well coordinated. These processes may be regulated by proteins N and Z in a dose-dependent manner. Z protein inhibits the viral polymerase L und thus the viral transcription and RNA synthesis. The chain is RNA-directed RNA polymerase L from Junin mammarenavirus (JUNV).